The sequence spans 701 residues: Polyribonucleotide nucleotidyltransferase (701 aa).

The Mg(2+) site is built by D487 and D493. The KH domain occupies 554–613 (PTMIAMKIDTDKIRDVIGKGGATIRAICEETKASIDIEDDGSIKIFGESKEAAEAARQRV). One can recognise an S1 motif domain in the interval 623–691 (GKIYLGKVER…NRGRIKLSIK (69 aa)).

It belongs to the polyribonucleotide nucleotidyltransferase family. As to quaternary structure, component of the RNA degradosome, which is a multiprotein complex involved in RNA processing and mRNA degradation. Mg(2+) serves as cofactor.

It is found in the cytoplasm. The catalysed reaction is RNA(n+1) + phosphate = RNA(n) + a ribonucleoside 5'-diphosphate. Its function is as follows. Involved in mRNA degradation. Catalyzes the phosphorolysis of single-stranded polyribonucleotides processively in the 3'- to 5'-direction. The protein is Polyribonucleotide nucleotidyltransferase of Pseudomonas syringae pv. tomato (strain ATCC BAA-871 / DC3000).